We begin with the raw amino-acid sequence, 551 residues long: Fusion glycoprotein F0 (551 aa).

Residues 1–23 (MHHLHPMIVCIFVMYTGIVGSDA) form the signal peptide. Residues 24-492 (IAGDQLLNIG…TAKTLYSLSA (469 aa)) are Extracellular-facing. N-linked (GlcNAc...) asparagine; by host glycans are attached at residues N65, N69, N77, and N90. Intrachain disulfides connect C68-C189, C328-C337, C352-C360, C384-C389, and C391-C414. Residues 107–131 (FAGVVVGLAALGVATAAQITAAVAI) form a fusion peptide region. Positions 132-160 (VKANANAAAINNLASSIQSTNKAVSDVID) form a coiled coil. 2 N-linked (GlcNAc...) asparagine; by host glycosylation sites follow: N431 and N461. Residues 456–481 (QINSINKSLKSAEDWIADSNFFANQA) adopt a coiled-coil conformation. The chain crosses the membrane as a helical span at residues 493-513 (IALILSVITLVVVGLLIAYII). Residues 514 to 551 (KLVSQIHQFRSLAATTMFHRENPAFFSKNNHGNIYGIS) lie on the Cytoplasmic side of the membrane.

It belongs to the paramyxoviruses fusion glycoprotein family. As to quaternary structure, homotrimer of disulfide-linked F1-F2. The inactive precursor F0 is glycosylated and proteolytically cleaved into F1 and F2 to be functionally active. The cleavage is mediated by cellular proteases during the transport and maturation of the polypeptide.

The protein resides in the virion membrane. The protein localises to the host cell membrane. Functionally, class I viral fusion protein. Under the current model, the protein has at least 3 conformational states: pre-fusion native state, pre-hairpin intermediate state, and post-fusion hairpin state. During viral and plasma cell membrane fusion, the heptad repeat (HR) regions assume a trimer-of-hairpins structure, positioning the fusion peptide in close proximity to the C-terminal region of the ectodomain. The formation of this structure appears to drive apposition and subsequent fusion of viral and plasma cell membranes. Directs fusion of viral and cellular membranes leading to delivery of the nucleocapsid into the cytoplasm. This fusion is pH independent and occurs directly at the outer cell membrane. The trimer of F1-F2 (F protein) probably interacts with HN at the virion surface. Upon HN binding to its cellular receptor, the hydrophobic fusion peptide is unmasked and interacts with the cellular membrane, inducing the fusion between cell and virion membranes. Later in infection, F proteins expressed at the plasma membrane of infected cells could mediate fusion with adjacent cells to form syncytia, a cytopathic effect that could lead to tissue necrosis. This chain is Fusion glycoprotein F0 (F), found in Homo sapiens (Human).